Here is a 342-residue protein sequence, read N- to C-terminus: Small GTPase LIP1 (342 aa).

Positions 12–285 (KEQILAPLCG…FHGDPYKYNN (274 aa)) are small GTPase-like. Residues 29 to 36 (GDSGVGKT), 90 to 94 (DVSGH), and 160 to 163 (NKAD) contribute to the GTP site. 2 disordered regions span residues 274–313 (TSFHGDPYKYNNTIPPLPAQRNLTPPPTLYPQQPVSTPDN) and 323–342 (SVQETTNNGSARSKRMDINV). Residues 323 to 333 (SVQETTNNGSA) show a composition bias toward polar residues.

The protein belongs to the small GTPase superfamily.

It localises to the nucleus. The protein resides in the cytoplasm. Functionally, functional small GTPase that acts as a negative factor controlling the light-dependent period shortening of circadian rhythms and light-induced phase resetting during the subjective night. May protect the clock from excessive or mistimed light. Suppresses red and blue light-mediated photomorphogenesis and is required for light-controlled inhibition of endoreplication and tolerance to salt stress. The entrainment of the circadian clock is independent from the other pleiotropic effects. Could be a regulator of seedling establishment. The chain is Small GTPase LIP1 from Arabidopsis thaliana (Mouse-ear cress).